We begin with the raw amino-acid sequence, 231 residues long: Large ribosomal subunit protein uL1 (231 aa).

This sequence belongs to the universal ribosomal protein uL1 family. In terms of assembly, part of the 50S ribosomal subunit.

In terms of biological role, binds directly to 23S rRNA. The L1 stalk is quite mobile in the ribosome, and is involved in E site tRNA release. Protein L1 is also a translational repressor protein, it controls the translation of the L11 operon by binding to its mRNA. This Mycoplasmopsis agalactiae (strain NCTC 10123 / CIP 59.7 / PG2) (Mycoplasma agalactiae) protein is Large ribosomal subunit protein uL1.